We begin with the raw amino-acid sequence, 204 residues long: MNFLNFSILIFAYLLGSINSAIIVCYIFRLPSPRSVGSGNPGTTNVLRIGGKVPAAITLIFDILKGLVPVVIAKVLTGNEFITACTALYAILGHIFPIFFGFKGGKGVATLIGTLFGFSWILGLIFVITWLCVAIITRYSSLSALVATVIASFSVIFTSDLQVAAPFLIIAIIILVKHKGNIQRLISGQESKIGDKAKAKNDSN.

The next 5 membrane-spanning stretches (helical) occupy residues 8–28 (ILIF…CYIF), 53–73 (VPAA…VVIA), 81–101 (FITA…IFFG), 116–136 (FGFS…VAII), and 155–175 (VIFT…IIIL).

Belongs to the PlsY family. As to quaternary structure, probably interacts with PlsX.

It is found in the cell inner membrane. It carries out the reaction an acyl phosphate + sn-glycerol 3-phosphate = a 1-acyl-sn-glycero-3-phosphate + phosphate. It participates in lipid metabolism; phospholipid metabolism. Its function is as follows. Catalyzes the transfer of an acyl group from acyl-phosphate (acyl-PO(4)) to glycerol-3-phosphate (G3P) to form lysophosphatidic acid (LPA). This enzyme utilizes acyl-phosphate as fatty acyl donor, but not acyl-CoA or acyl-ACP. This is Glycerol-3-phosphate acyltransferase from Francisella tularensis subsp. novicida (strain U112).